The chain runs to 639 residues: Protein zwilch homolog (639 aa).

Residues 76-95 are compositionally biased toward basic and acidic residues; sequence QKTSSLLNRRENKKTIKSEK. The tract at residues 76 to 116 is disordered; that stretch reads QKTSSLLNRRENKKTIKSEKEDESMDMETAEGDKENTVSET. Acidic residues predominate over residues 96–105; sequence EDESMDMETA.

The protein belongs to the ZWILCH family. Component of the RZZ complex composed of rod-1, czw-1 and zwl-1. Interacts with the spindly-like protein spdl-1. Interacts with NDC80 complex component ndc-80.

Its subcellular location is the cytoplasm. The protein localises to the cell cortex. The protein resides in the chromosome. It localises to the centromere. It is found in the kinetochore. Its subcellular location is the cytoskeleton. The protein localises to the spindle. Essential component of the mitotic checkpoint, which prevents cells from prematurely exiting mitosis. Required for chromosome segregation, the assembly of the dynein-dynactin and mdf-1-mdf-2 complexes onto kinetochores and spindle pole separation. Its function related to the spindle assembly machinery and kinetochore-microtubule attachments likely depends on its association in the mitotic RZZ complex. The RZZ complex recruits the spindly-like protein spdl-1 to kinetochores. To prevent irregular chromosome segregation, the complex also inhibits the attachment of the kinetochore-associated NDC80 complex to microtubules. The recruitment of spdl-1 to kinetochores relieves this inhibition. Required for embryonic development. The sequence is that of Protein zwilch homolog (zwl-1) from Caenorhabditis briggsae.